Reading from the N-terminus, the 80-residue chain is Conotoxin VnMSGL-0123 (80 aa).

Residues 1-20 form the signal peptide; it reads MSGLGIMVLTLLLLVSMATS. A propeptide spanning residues 21-44 is cleaved from the precursor; that stretch reads HQDGGGKQATQRDAINVRRRRSIT. Cystine bridges form between cysteine 53–cysteine 65, cysteine 57–cysteine 74, and cysteine 64–cysteine 78. Phenylalanine amide is present on phenylalanine 79.

It belongs to the conotoxin O3 superfamily. As to expression, expressed by the venom duct.

It localises to the secreted. In Conus ventricosus (Mediterranean cone), this protein is Conotoxin VnMSGL-0123.